Here is a 500-residue protein sequence, read N- to C-terminus: Protein nucleotidyltransferase YdiU (500 aa).

Gly-96, Gly-98, Arg-99, Lys-119, Asp-131, Gly-132, Arg-182, and Arg-189 together coordinate ATP. Asp-258 acts as the Proton acceptor in catalysis. Mg(2+) contacts are provided by Asn-259 and Asp-268. ATP is bound at residue Asp-268.

This sequence belongs to the SELO family. Requires Mg(2+) as cofactor. It depends on Mn(2+) as a cofactor.

The enzyme catalyses L-seryl-[protein] + ATP = 3-O-(5'-adenylyl)-L-seryl-[protein] + diphosphate. The catalysed reaction is L-threonyl-[protein] + ATP = 3-O-(5'-adenylyl)-L-threonyl-[protein] + diphosphate. It catalyses the reaction L-tyrosyl-[protein] + ATP = O-(5'-adenylyl)-L-tyrosyl-[protein] + diphosphate. It carries out the reaction L-histidyl-[protein] + UTP = N(tele)-(5'-uridylyl)-L-histidyl-[protein] + diphosphate. The enzyme catalyses L-seryl-[protein] + UTP = O-(5'-uridylyl)-L-seryl-[protein] + diphosphate. The catalysed reaction is L-tyrosyl-[protein] + UTP = O-(5'-uridylyl)-L-tyrosyl-[protein] + diphosphate. Functionally, nucleotidyltransferase involved in the post-translational modification of proteins. It can catalyze the addition of adenosine monophosphate (AMP) or uridine monophosphate (UMP) to a protein, resulting in modifications known as AMPylation and UMPylation. This is Protein nucleotidyltransferase YdiU from Rhizobium johnstonii (strain DSM 114642 / LMG 32736 / 3841) (Rhizobium leguminosarum bv. viciae).